Reading from the N-terminus, the 483-residue chain is Glycogen synthase (483 aa).

Residue lysine 18 participates in ADP-alpha-D-glucose binding.

The protein belongs to the glycosyltransferase 1 family. Bacterial/plant glycogen synthase subfamily.

It catalyses the reaction [(1-&gt;4)-alpha-D-glucosyl](n) + ADP-alpha-D-glucose = [(1-&gt;4)-alpha-D-glucosyl](n+1) + ADP + H(+). Its pathway is glycan biosynthesis; glycogen biosynthesis. In terms of biological role, synthesizes alpha-1,4-glucan chains using ADP-glucose. The protein is Glycogen synthase of Rhodopseudomonas palustris (strain TIE-1).